Consider the following 68-residue polypeptide: Large ribosomal subunit protein bL31 (68 aa).

Positions 17, 19, 37, and 40 each coordinate Zn(2+).

The protein belongs to the bacterial ribosomal protein bL31 family. Type A subfamily. Part of the 50S ribosomal subunit. It depends on Zn(2+) as a cofactor.

Functionally, binds the 23S rRNA. The protein is Large ribosomal subunit protein bL31 of Dehalococcoides mccartyi (strain ATCC BAA-2266 / KCTC 15142 / 195) (Dehalococcoides ethenogenes (strain 195)).